Consider the following 430-residue polypeptide: Adenylosuccinate synthetase (430 aa).

GTP-binding positions include 11 to 17 (GDEGKGK) and 39 to 41 (GHS). Asp-12 acts as the Proton acceptor in catalysis. Residues Asp-12 and Gly-39 each contribute to the Mg(2+) site. IMP is bound by residues 12–15 (DEGK), 37–40 (NAGH), Thr-129, Arg-143, Asn-221, Thr-236, and Arg-300. The active-site Proton donor is the His-40. Position 296 to 302 (296 to 302 (VSTGRKR)) interacts with substrate. GTP contacts are provided by residues Arg-302, 328-330 (KLD), and 412-414 (GTG).

It belongs to the adenylosuccinate synthetase family. As to quaternary structure, homodimer. The cofactor is Mg(2+).

Its subcellular location is the cytoplasm. It catalyses the reaction IMP + L-aspartate + GTP = N(6)-(1,2-dicarboxyethyl)-AMP + GDP + phosphate + 2 H(+). It functions in the pathway purine metabolism; AMP biosynthesis via de novo pathway; AMP from IMP: step 1/2. In terms of biological role, plays an important role in the de novo pathway and in the salvage pathway of purine nucleotide biosynthesis. Catalyzes the first committed step in the biosynthesis of AMP from IMP. This is Adenylosuccinate synthetase from Sordaria macrospora (strain ATCC MYA-333 / DSM 997 / K(L3346) / K-hell).